A 256-amino-acid chain; its full sequence is GTP cyclohydrolase FolE2 (256 aa).

This sequence belongs to the GTP cyclohydrolase IV family.

It carries out the reaction GTP + H2O = 7,8-dihydroneopterin 3'-triphosphate + formate + H(+). It participates in cofactor biosynthesis; 7,8-dihydroneopterin triphosphate biosynthesis; 7,8-dihydroneopterin triphosphate from GTP: step 1/1. Functionally, converts GTP to 7,8-dihydroneopterin triphosphate. The polypeptide is GTP cyclohydrolase FolE2 (Caldicellulosiruptor saccharolyticus (strain ATCC 43494 / DSM 8903 / Tp8T 6331)).